A 234-amino-acid polypeptide reads, in one-letter code: Prolactin-6A1 (234 aa).

The N-terminal stretch at 1-33 (MVKSWLRMSKKMEAGTLLMLLMSNILLWENVAS) is a signal peptide. N-linked (GlcNAc...) asparagine glycosylation is present at Asn61. Intrachain disulfides connect Cys93–Cys209 and Cys226–Cys234.

It belongs to the somatotropin/prolactin family.

The protein localises to the secreted. This chain is Prolactin-6A1 (Prl6a1), found in Rattus norvegicus (Rat).